The sequence spans 266 residues: Putative carbamate hydrolase RutD (266 aa).

It belongs to the AB hydrolase superfamily. Hydrolase RutD family.

It carries out the reaction carbamate + 2 H(+) = NH4(+) + CO2. Involved in pyrimidine catabolism. May facilitate the hydrolysis of carbamate, a reaction that can also occur spontaneously. This is Putative carbamate hydrolase RutD from Escherichia coli O127:H6 (strain E2348/69 / EPEC).